The following is a 638-amino-acid chain: MDCEGTNEEGRGCTGWFSVEAIVEKHTGDTISDDETDNSSDTGSDLIGFIDDSSISDYAEQEVTQALFQAQQKQANTKAVRNLKRKLLGSQNSPLQDITNQHRQQSDSQQNTHQVNNSQAKRRAVDSVPDSGYGYTEVETLTPVQVDKQYEENGGLPSVCSQGGSNASVEDIDVDTHVNSVTQICELLKCSNVKAALLSKFKTVYGVSFAELVRVFKSDKTCCSDWVCAAFGVAGSVAESIKSLIQQYCLYYHIQCLTCNWGVIVLMLVRFTCAKNRTTIKNCLCMLLNVPETQLLIEPPKLRSTAVALYFYKTGLSNISETYGDTPEWIVRQTQLEHSFDDATFDLSKMVQWAFDHDITDDSEIAFKYAQLADIDSNAAAFLKSNCQAKYVKDCATMTRHYKRAQKRSMCMSQWLQYRCSKIEEGGSWKEIAKFLRFQHVNFIYFLQVLKQFLKGTPKHNCIVIYGPPNTGKSQFAMSFIKFMQGSVISYVNSNSHFWLQPLEDAKVAVLDDATYSCWLYIDKYLRNFLDGNPCCIDRKHRSLLQVTCPPLIITSNINPQEDNSLLYLHSRVTVIPFPNTFPFDSNGNPVYALTDVNWKSFFSTTWSRLDLEEDADKENGEPLPAFKCVPGENTRLL.

A Nuclear localization signal motif is present at residues 84-86 (KRK). The residue at position 90 (serine 90) is a Phosphoserine; by host. Over residues 90 to 119 (SQNSPLQDITNQHRQQSDSQQNTHQVNNSQ) the composition is skewed to polar residues. The segment at 90–133 (SQNSPLQDITNQHRQQSDSQQNTHQVNNSQAKRRAVDSVPDSGY) is disordered. The segment at 176–342 (THVNSVTQIC…QTQLEHSFDD (167 aa)) is DNA-binding region. An SF3 helicase domain is found at 441–591 (VNFIYFLQVL…FPFDSNGNPV (151 aa)). Residue 467–474 (GPPNTGKS) coordinates ATP.

It belongs to the papillomaviridae E1 protein family. Can form hexamers. Interacts with E2 protein; this interaction increases E1 DNA binding specificity. Interacts with host DNA polymerase subunit POLA2. Interacts with host single stranded DNA-binding protein RPA1. Interacts with host TOP1; this interaction stimulates the enzymatic activity of TOP1. Phosphorylated.

Its subcellular location is the host nucleus. It carries out the reaction Couples ATP hydrolysis with the unwinding of duplex DNA by translocating in the 3'-5' direction.. It catalyses the reaction ATP + H2O = ADP + phosphate + H(+). ATP-dependent DNA 3'-5' helicase required for initiation of viral DNA replication. It forms a complex with the viral E2 protein. The E1-E2 complex binds to the replication origin which contains binding sites for both proteins. During the initial step, a dimer of E1 interacts with a dimer of protein E2 leading to a complex that binds the viral origin of replication with high specificity. Then, a second dimer of E1 displaces the E2 dimer in an ATP-dependent manner to form the E1 tetramer. Following this, two E1 monomers are added to each half of the site, which results in the formation of two E1 trimers on the viral ori. Subsequently, two hexamers will be created. The double hexamer acts as a bi-directional helicase machinery and unwinds the viral DNA and then recruits the host DNA polymerase to start replication. The polypeptide is Replication protein E1 (Homo sapiens (Human)).